The following is a 3491-amino-acid chain: Erythronolide synthase EryA1 (3491 aa).

Positions 1–484 (MSGPRSRTTS…TPRALAEALA (484 aa)) are loading domain. Positions 57–372 (VFVFPGQGAQ…AAQAFTGGVA (316 aa)) are acyltransferase 1. Residue serine 145 is the Acyl-ester intermediate; for acyltransferase 1 activity of the active site. Positions 386 to 410 (PALCRSSRRPRRKTSRPSPASTGTR) are disordered. Over residues 391–400 (SSRRPRRKTS) the composition is skewed to basic residues. Positions 412–487 (RTCCERLLAV…ALAEALAAGT (76 aa)) constitute a Carrier 1 domain. Serine 447 is subject to O-(pantetheine 4'-phosphoryl)serine. A Ketosynthase family 3 (KS3) 1 domain is found at 504-928 (GEPVAVVAMA…GTNAHAIIEE (425 aa)). Module regions lie at residues 507–1958 (VAVV…AHLA) and 1982–3404 (IAIV…GFLD). Cysteine 677 serves as the catalytic Acyl-thioester intermediate; for beta-ketoacyl synthase 1 activity. Residues histidine 812 and histidine 850 each act as for beta-ketoacyl synthase 1 activity in the active site. An acyltransferase 2 region spans residues 1031 to 1352 (VFVFPGQGWQ…ALSRAFAAGV (322 aa)). Serine 1128 (acyl-ester intermediate; for acyltransferase 2 activity) is an active-site residue. The segment at 1613-1790 (GTVLVTGGTG…ATAVAWGTWA (178 aa)) is beta-ketoacyl reductase 1. Residues 1621–1624 (TGGV), 1644–1647 (SRSG), 1673–1674 (DV), lysine 1723, and 1745–1746 (FS) each bind NADP(+). Tyrosine 1760 serves as the catalytic For beta-ketoacyl reductase 1 activity. The Carrier 2 domain occupies 1886 to 1961 (EALFELVRSH…TLAAHLAAEL (76 aa)). Serine 1921 carries the post-translational modification O-(pantetheine 4'-phosphoryl)serine. Residues 1979–2402 (DEPIAIVGMA…GTNAHVIIAE (424 aa)) form the Ketosynthase family 3 (KS3) 2 domain. Residue cysteine 2148 is the Acyl-thioester intermediate; for beta-ketoacyl synthase 2 activity of the active site. Residues histidine 2283 and histidine 2323 each act as for beta-ketoacyl synthase 2 activity in the active site. The tract at residues 2508–2827 (VFVFPGQGAQ…LADAHTRGVA (320 aa)) is acyltransferase 3. The Acyl-ester intermediate; for acyltransferase 3 activity role is filled by serine 2598. The beta-ketoacyl reductase 2 stretch occupies residues 3057–3233 (GTILVTGGTA…ATSVAWGLWA (177 aa)). NADP(+) is bound by residues 3065–3068 (TAGL), 3088–3091 (SRRG), 3117–3118 (DV), lysine 3168, and 3188–3189 (FS). Catalysis depends on tyrosine 3203, which acts as the For beta-ketoacyl reductase 2 activity. One can recognise a Carrier 3 domain in the interval 3329–3407 (ERTAELVRLV…AVAGFLDAEL (79 aa)). The residue at position 3367 (serine 3367) is an O-(pantetheine 4'-phosphoryl)serine. The segment at 3456-3491 (QAADASGTGANPSGDDLGEAGVDELLEALGRELDGD) is disordered. Acidic residues predominate over residues 3471-3481 (DLGEAGVDELL).

As to quaternary structure, homodimer. Erythronolide synthase is composed of EryAI, EryAII and EryAIII multimodular (2 modules) polypeptides each coding for a functional synthase subunit which participates in 2 of the six FAS-like elongation steps required for formation of the polyketide. Module 1, 2, 3, 4, 5, and 6 participating in biosynthesis steps 1, 2, 3, 4, 5, and 6, respectively. The cofactor is pantetheine 4'-phosphate.

It carries out the reaction 6 (S)-methylmalonyl-CoA + propanoyl-CoA + 6 NADPH + 12 H(+) = 6-deoxyerythronolide B + 6 CO2 + 6 NADP(+) + 7 CoA + H2O. Its pathway is antibiotic biosynthesis; erythromycin biosynthesis. Involved in the biosynthesis of antibiotic erythromycin via the biosynthesis of its aglycone precursor, 6-deoxyerythronolide B (6-dEB). The protein is Erythronolide synthase EryA1 (eryA) of Saccharopolyspora erythraea (Streptomyces erythraeus).